The following is a 189-amino-acid chain: Ribulose bisphosphate carboxylase small subunit, chloroplastic (189 aa).

The N-terminal 66 residues, 1 to 66 (MASSIMALSS…KTTSNGSRVR (66 aa)), are a transit peptide targeting the chloroplast.

This sequence belongs to the RuBisCO small chain family. In terms of assembly, heterohexadecamer of 8 large and 8 small subunits.

Its subcellular location is the plastid. It is found in the chloroplast. In terms of biological role, ruBisCO catalyzes two reactions: the carboxylation of D-ribulose 1,5-bisphosphate, the primary event in carbon dioxide fixation, as well as the oxidative fragmentation of the pentose substrate. Both reactions occur simultaneously and in competition at the same active site. Although the small subunit is not catalytic it is essential for maximal activity. The sequence is that of Ribulose bisphosphate carboxylase small subunit, chloroplastic from Larix laricina (Tamarack).